Consider the following 500-residue polypeptide: NAD(P)H-quinone oxidoreductase chain 4, chloroplastic (500 aa).

The next 14 helical transmembrane spans lie at 4 to 24, 37 to 57, 87 to 107, 113 to 130, 134 to 154, 167 to 187, 211 to 231, 242 to 262, 272 to 292, 305 to 325, 330 to 350, 386 to 406, 416 to 436, and 462 to 482; these read FPWLTIIVVFPISAGLSIFFL, ICICLLELLLMTYVFCYHFQL, IGPILLTGFITTLATLAAWPV, LFHFLMLAMYSGQIGLFS, LLLFFLMWELELIPVYLLLSM, FILYTAGGSVFLLMGVLGMGL, ILFYFGFLIAYAVKLPIIPLH, HYSTCMLLAGILLKMGAYGLV, AHSIFSPWLVLAGTLQIIYAA, IAYSSVSHMGFTIIGIGSITD, GAILQLLSHGFLGAALFFLAG, LALPGMSGFVAEAVVFFGIIT, ILITFVMAIGMILTPIYLLSM, and LFVSICIFLPVIGIGIYPDFV.

This sequence belongs to the complex I subunit 4 family.

It is found in the plastid. The protein resides in the chloroplast thylakoid membrane. It catalyses the reaction a plastoquinone + NADH + (n+1) H(+)(in) = a plastoquinol + NAD(+) + n H(+)(out). The enzyme catalyses a plastoquinone + NADPH + (n+1) H(+)(in) = a plastoquinol + NADP(+) + n H(+)(out). This Acorus calamus var. americanus (American sweet flag) protein is NAD(P)H-quinone oxidoreductase chain 4, chloroplastic.